Reading from the N-terminus, the 463-residue chain is UDP-N-acetylmuramate--L-alanine ligase (463 aa).

112–118 (GTHGKTT) is a binding site for ATP.

Belongs to the MurCDEF family.

The protein localises to the cytoplasm. It carries out the reaction UDP-N-acetyl-alpha-D-muramate + L-alanine + ATP = UDP-N-acetyl-alpha-D-muramoyl-L-alanine + ADP + phosphate + H(+). Its pathway is cell wall biogenesis; peptidoglycan biosynthesis. Cell wall formation. This is UDP-N-acetylmuramate--L-alanine ligase from Thiobacillus denitrificans (strain ATCC 25259 / T1).